A 357-amino-acid polypeptide reads, in one-letter code: Aminomethyltransferase (357 aa).

It belongs to the GcvT family. As to quaternary structure, the glycine cleavage system is composed of four proteins: P, T, L and H.

It carries out the reaction N(6)-[(R)-S(8)-aminomethyldihydrolipoyl]-L-lysyl-[protein] + (6S)-5,6,7,8-tetrahydrofolate = N(6)-[(R)-dihydrolipoyl]-L-lysyl-[protein] + (6R)-5,10-methylene-5,6,7,8-tetrahydrofolate + NH4(+). In terms of biological role, the glycine cleavage system catalyzes the degradation of glycine. This Deinococcus deserti (strain DSM 17065 / CIP 109153 / LMG 22923 / VCD115) protein is Aminomethyltransferase.